The sequence spans 131 residues: Secreted RxLR effector protein 45 (131 aa).

An N-terminal signal peptide occupies residues 1–16 (MSIFIFISLVLGLAHQ). A RxLR motif is present at residues 56–59 (RPLR). Asparagine 128 is a glycosylation site (N-linked (GlcNAc...) asparagine).

It belongs to the RxLR effector family.

The protein localises to the secreted. Its subcellular location is the host nucleus. Functionally, secreted effector that completely suppresses the host cell death induced by cell death-inducing proteins. The polypeptide is Secreted RxLR effector protein 45 (Plasmopara viticola (Downy mildew of grapevine)).